Consider the following 109-residue polypeptide: Protein FAM32A-like (109 aa).

Positions 1–48 (MSEYKSVQKGSLKLKGVSLPSKKKKKKNKEMKRLEEQVLTSENEEGTK) are disordered. Low complexity predominate over residues 9-20 (KGSLKLKGVSLP). The span at 21-30 (SKKKKKKNKE) shows a compositional bias: basic residues.

The protein belongs to the FAM32 family.

The protein localises to the nucleus. May induce G2 arrest and apoptosis. May also increase cell sensitivity to apoptotic stimuli. This is Protein FAM32A-like (fam32al) from Danio rerio (Zebrafish).